The sequence spans 203 residues: Thymidylate kinase (203 aa).

7–14 (GGEGAGKT) is a binding site for ATP.

The protein belongs to the thymidylate kinase family.

It carries out the reaction dTMP + ATP = dTDP + ADP. Functionally, phosphorylation of dTMP to form dTDP in both de novo and salvage pathways of dTTP synthesis. The protein is Thymidylate kinase (tmk) of Chlamydia muridarum (strain MoPn / Nigg).